The primary structure comprises 955 residues: MSRALDTHSDFIPRHIGPSEADQAKMLATIGCSSLDALLEEVVPPRIRNQAPLALPGARSEPDVLAELKQMAARNKVFRNYIGQGYYGTHTPNVVLRNVLENPAWYTAYTPYQPEISQGRLEALLNYQTMVADLTGLDISNASLLDEGTAAAEAMTLARRSAKSKSAVFFVSQHCHPQTIEVVRTRAQGLDIDVLVGDESQGLPECFGVLLQYPHSLGGVVNYRELAEAAHAQGAVVACATDLLALALLTPPGEWGADIAVGTAQRFGVPFGFGGPHAGFMACRDAFKRNMPGRLVGVSKDAQGNPALRLALQTREQHIRREKATSNICTAQVLLAVMAGLYAVWHGPAGLRRIATRVHTFAGVLRQHVQALGLTVENDSYFDTLLINTGPATPAVLRAAECAHINLRRVDAGRVAVSIDETVTVEDLQALINVFAAGLGKDDITLDAATLAPEAGLPAGTVRTSPILSHPVFSSVQSETDMLRYLRKLADKDLALDRSMIPLGSCTMKLNATAEMIPITWPEFALIHPFAPADQTAGYRELIERLSAALCEITGYDNISLQPNSGAQGEYAGLLAIRGYHQARGEHQRNICLIPSSAHGTNPASAQLAGMDVVVVASDDHGNVDLDDLRAKIEQVGDRLAALMITYPSTHGVFEETVTEICERVHAAGGQVYLDGANMNAMVGVAKPGKFGSDVSHLNLHKTFCIPHGGGGPGVGPVAVRAHLAPYLPGVLNEQGKLDAEAKVGPVSAAPYGSAGILAIPFVYISLMGAEGLRRATEVAILNANYVATRLREYYPVLYAGRHGRVAHECILDIRPLKESIGISAEDIAKRLMDYGFHAPTMSFPVAGTLMVEPTESEGLAELERFIDAMIAIRAEVAQVERGERDREDNVLKNAPHTAQMLLAEEWHHAYPRQQAAYPLASLRDGKYWPPVARVDNAYGDRNLVCSCLPIEAYI.

N6-(pyridoxal phosphate)lysine is present on Lys702.

This sequence belongs to the GcvP family. As to quaternary structure, the glycine cleavage system is composed of four proteins: P, T, L and H. The cofactor is pyridoxal 5'-phosphate.

The catalysed reaction is N(6)-[(R)-lipoyl]-L-lysyl-[glycine-cleavage complex H protein] + glycine + H(+) = N(6)-[(R)-S(8)-aminomethyldihydrolipoyl]-L-lysyl-[glycine-cleavage complex H protein] + CO2. Functionally, the glycine cleavage system catalyzes the degradation of glycine. The P protein binds the alpha-amino group of glycine through its pyridoxal phosphate cofactor; CO(2) is released and the remaining methylamine moiety is then transferred to the lipoamide cofactor of the H protein. The sequence is that of Glycine dehydrogenase (decarboxylating) from Bordetella avium (strain 197N).